The sequence spans 345 residues: tRNA-specific 2-thiouridylase MnmA (345 aa).

Residues 6–13 (LMSGGVDS) and leucine 32 each bind ATP. Cysteine 92 serves as the catalytic Nucleophile. Cysteine 92 and cysteine 191 form a disulfide bridge. Glycine 116 is a binding site for ATP. Positions 138-140 (KDQ) are interaction with tRNA. Residue cysteine 191 is the Cysteine persulfide intermediate of the active site. Positions 293-294 (RY) are interaction with tRNA.

Belongs to the MnmA/TRMU family.

Its subcellular location is the cytoplasm. The catalysed reaction is S-sulfanyl-L-cysteinyl-[protein] + uridine(34) in tRNA + AH2 + ATP = 2-thiouridine(34) in tRNA + L-cysteinyl-[protein] + A + AMP + diphosphate + H(+). Its function is as follows. Catalyzes the 2-thiolation of uridine at the wobble position (U34) of tRNA, leading to the formation of s(2)U34. The protein is tRNA-specific 2-thiouridylase MnmA of Helicobacter hepaticus (strain ATCC 51449 / 3B1).